The following is a 375-amino-acid chain: ATP phosphoribosyltransferase regulatory subunit (375 aa).

It belongs to the class-II aminoacyl-tRNA synthetase family. HisZ subfamily. Heteromultimer composed of HisG and HisZ subunits.

Its subcellular location is the cytoplasm. It functions in the pathway amino-acid biosynthesis; L-histidine biosynthesis; L-histidine from 5-phospho-alpha-D-ribose 1-diphosphate: step 1/9. In terms of biological role, required for the first step of histidine biosynthesis. May allow the feedback regulation of ATP phosphoribosyltransferase activity by histidine. This Agrobacterium fabrum (strain C58 / ATCC 33970) (Agrobacterium tumefaciens (strain C58)) protein is ATP phosphoribosyltransferase regulatory subunit.